The primary structure comprises 401 residues: Argininosuccinate synthase (401 aa).

An ATP-binding site is contributed by 9-17; it reads AYSGGLDTS. L-citrulline is bound at residue tyrosine 86. Glycine 116 is a binding site for ATP. L-aspartate-binding residues include threonine 118, asparagine 122, and aspartate 123. Position 122 (asparagine 122) interacts with L-citrulline. Residues arginine 126, serine 174, serine 183, glutamate 259, and tyrosine 271 each coordinate L-citrulline.

It belongs to the argininosuccinate synthase family. Type 1 subfamily. Homotetramer.

The protein resides in the cytoplasm. It catalyses the reaction L-citrulline + L-aspartate + ATP = 2-(N(omega)-L-arginino)succinate + AMP + diphosphate + H(+). It participates in amino-acid biosynthesis; L-arginine biosynthesis; L-arginine from L-ornithine and carbamoyl phosphate: step 2/3. The polypeptide is Argininosuccinate synthase (Bacillus cereus (strain AH187)).